The chain runs to 167 residues: MKIILRADVENLGRLGDVVTVKPGFGRNYLLPQGLGMLASQANLKAFELERKKLQARMDALRNAAADIAAKLEGLVLAIPMRVGENDKLYGSVTTAIIGDGLAAQGIEVDRRRILLDSAIRALGEYPVRVRLHADVTAEILVKVVSEDKVNDVAESAPAEEPEAAAE.

This sequence belongs to the bacterial ribosomal protein bL9 family.

Functionally, binds to the 23S rRNA. This chain is Large ribosomal subunit protein bL9, found in Nitratidesulfovibrio vulgaris (strain ATCC 29579 / DSM 644 / CCUG 34227 / NCIMB 8303 / VKM B-1760 / Hildenborough) (Desulfovibrio vulgaris).